Consider the following 890-residue polypeptide: Exo-beta-D-glucosaminidase (890 aa).

The signal sequence occupies residues Met1 to Ala18. The propeptide occupies Ala19–Lys26. Residues Asn194, Asn334, and Asn438 are each glycosylated (N-linked (GlcNAc...) asparagine). Asp462 acts as the Proton donor in catalysis. Glu537 functions as the Nucleophile in the catalytic mechanism. Residues Asn576 and Asn687 are each glycosylated (N-linked (GlcNAc...) asparagine).

The protein belongs to the glycosyl hydrolase 2 family. As to quaternary structure, monomer.

It is found in the secreted. It localises to the extracellular space. The catalysed reaction is Hydrolysis of chitosan or chitosan oligosaccharides to remove successive D-glucosamine residues from the non-reducing termini.. In terms of biological role, hydrolyzes chitosan and chitooligosaccharides with retention of anomeric configuration. Has no activity against beta-D-galactoside, beta-D-glucuronide, beta-D-mannoside, chitin, glycol chitosan, cellulose, N,N'-diacetylchitibiose and pNP-GlcNAc. This chain is Exo-beta-D-glucosaminidase, found in Hypocrea virens (Gliocladium virens).